We begin with the raw amino-acid sequence, 320 residues long: Nuclease (320 aa).

Catalysis depends on H155, which acts as the Proton acceptor. Residue N187 participates in Mg(2+) binding. N204 is a glycosylation site (N-linked (GlcNAc...) asparagine). A disulfide bond links C312 and C317.

Belongs to the DNA/RNA non-specific endonuclease family. Homodimer; as a result of non-covalent interactions and not through the disulfide linkages between the two monomers. The cofactor is Mg(2+). Mn(2+) serves as cofactor. In terms of processing, glycosylated.

The protein resides in the secreted. This enzyme has both RNase and DNase activity. The protein is Nuclease of Syncephalastrum racemosum (Filamentous fungus).